We begin with the raw amino-acid sequence, 511 residues long: Chromosomal replication initiator protein DnaA (511 aa).

The segment at Met-1–Pro-90 is domain I, interacts with DnaA modulators. The interval Asn-91–Ser-174 is domain II. The tract at residues Val-133–Arg-162 is disordered. Basic and acidic residues predominate over residues Ala-135–Phe-144. Residues Tyr-175 to Ser-391 are domain III, AAA+ region. ATP is bound by residues Gly-219, Gly-221, Lys-222, and Thr-223. Residues His-392–Thr-511 are domain IV, binds dsDNA.

Belongs to the DnaA family. As to quaternary structure, oligomerizes as a right-handed, spiral filament on DNA at oriC.

It localises to the cytoplasm. In terms of biological role, plays an essential role in the initiation and regulation of chromosomal replication. ATP-DnaA binds to the origin of replication (oriC) to initiate formation of the DNA replication initiation complex once per cell cycle. Binds the DnaA box (a 9 base pair repeat at the origin) and separates the double-stranded (ds)DNA. Forms a right-handed helical filament on oriC DNA; dsDNA binds to the exterior of the filament while single-stranded (ss)DNA is stabiized in the filament's interior. The ATP-DnaA-oriC complex binds and stabilizes one strand of the AT-rich DNA unwinding element (DUE), permitting loading of DNA polymerase. After initiation quickly degrades to an ADP-DnaA complex that is not apt for DNA replication. Binds acidic phospholipids. The protein is Chromosomal replication initiator protein DnaA of Pseudomonas savastanoi pv. phaseolicola (strain 1448A / Race 6) (Pseudomonas syringae pv. phaseolicola (strain 1448A / Race 6)).